Consider the following 1516-residue polypeptide: Mediator of RNA polymerase II transcription subunit 14 (1516 aa).

Disordered regions lie at residues 22-98 (LSSQ…EVPA) and 1434-1516 (MHRQ…YPPQ). Residues 34-47 (SPAAPISPAPSGSA) show a composition bias toward low complexity. Residues 72–83 (SEVDVKSIHSSD) are compositionally biased toward basic and acidic residues. The span at 1463 to 1473 (SHQQHMMNPGS) shows a compositional bias: low complexity. The segment covering 1474 to 1483 (VGPGSVGGPG) has biased composition (gly residues). Residues 1502–1516 (QSYHHPLHHQQYPPQ) are compositionally biased toward low complexity.

This sequence belongs to the Mediator complex subunit 14 family. As to quaternary structure, component of the Mediator complex.

The protein resides in the nucleus. In terms of biological role, component of the Mediator complex, a coactivator involved in the regulated transcription of nearly all RNA polymerase II-dependent genes. Mediator functions as a bridge to convey information from gene-specific regulatory proteins to the basal RNA polymerase II transcription machinery. Mediator is recruited to promoters by direct interactions with regulatory proteins and serves as a scaffold for the assembly of a functional preinitiation complex with RNA polymerase II and the general transcription factors. Required for transcription in the embryo and for phosphorylation of the RNA polymerase II C-terminal domain repeat. This is Mediator of RNA polymerase II transcription subunit 14 (rgr-1) from Caenorhabditis elegans.